The chain runs to 274 residues: 3-methyl-2-oxobutanoate hydroxymethyltransferase (274 aa).

Mg(2+)-binding residues include aspartate 50 and aspartate 89. Residues 50–51, aspartate 89, and lysine 119 each bind 3-methyl-2-oxobutanoate; that span reads DS. Glutamate 121 lines the Mg(2+) pocket. The active-site Proton acceptor is the glutamate 188.

This sequence belongs to the PanB family. Homodecamer; pentamer of dimers. Requires Mg(2+) as cofactor.

The protein localises to the cytoplasm. It catalyses the reaction 3-methyl-2-oxobutanoate + (6R)-5,10-methylene-5,6,7,8-tetrahydrofolate + H2O = 2-dehydropantoate + (6S)-5,6,7,8-tetrahydrofolate. It functions in the pathway cofactor biosynthesis; (R)-pantothenate biosynthesis; (R)-pantoate from 3-methyl-2-oxobutanoate: step 1/2. Its function is as follows. Catalyzes the reversible reaction in which hydroxymethyl group from 5,10-methylenetetrahydrofolate is transferred onto alpha-ketoisovalerate to form ketopantoate. The polypeptide is 3-methyl-2-oxobutanoate hydroxymethyltransferase (Methylorubrum populi (strain ATCC BAA-705 / NCIMB 13946 / BJ001) (Methylobacterium populi)).